An 84-amino-acid chain; its full sequence is Small ribosomal subunit protein uS17 (84 aa).

Belongs to the universal ribosomal protein uS17 family. In terms of assembly, part of the 30S ribosomal subunit.

Functionally, one of the primary rRNA binding proteins, it binds specifically to the 5'-end of 16S ribosomal RNA. The polypeptide is Small ribosomal subunit protein uS17 (Nitrosomonas europaea (strain ATCC 19718 / CIP 103999 / KCTC 2705 / NBRC 14298)).